The following is a 122-amino-acid chain: Small ribosomal subunit protein bS16 (122 aa).

The segment at 85–122 (REAKNNPIKAKPGKRAQERAAEKAQKAADAAAAADAAE) is disordered. Positions 99-110 (RAQERAAEKAQK) are enriched in basic and acidic residues. A compositionally biased stretch (low complexity) spans 111–122 (AADAAAAADAAE).

This sequence belongs to the bacterial ribosomal protein bS16 family.

This is Small ribosomal subunit protein bS16 from Rhizobium etli (strain ATCC 51251 / DSM 11541 / JCM 21823 / NBRC 15573 / CFN 42).